We begin with the raw amino-acid sequence, 282 residues long: 2-dehydro-3-deoxyphosphooctonate aldolase (282 aa).

Belongs to the KdsA family.

It localises to the cytoplasm. The catalysed reaction is D-arabinose 5-phosphate + phosphoenolpyruvate + H2O = 3-deoxy-alpha-D-manno-2-octulosonate-8-phosphate + phosphate. The protein operates within carbohydrate biosynthesis; 3-deoxy-D-manno-octulosonate biosynthesis; 3-deoxy-D-manno-octulosonate from D-ribulose 5-phosphate: step 2/3. Its pathway is bacterial outer membrane biogenesis; lipopolysaccharide biosynthesis. The protein is 2-dehydro-3-deoxyphosphooctonate aldolase of Shewanella sediminis (strain HAW-EB3).